The sequence spans 382 residues: Exostosin-1 homolog (382 aa).

A signal peptide spans 1 to 20; sequence MQNVMKFHLVIFMLFGSVRL. Asparagine 268 carries an N-linked (GlcNAc...) asparagine glycan.

This sequence belongs to the glycosyltransferase 47 family. Interacts with rib-2.

The protein localises to the endoplasmic reticulum. The protein resides in the golgi apparatus. In terms of biological role, required for the biosynthesis of heparan sulfate by positively regulating N-acetylglucosamine transferase II (GlcNAcT-II) and glucuronyl transferase II (GlcAT-II) activities of glycosyltransferase rib-2. Probably not directly involved in chondroitin sulfate biosynthesis but negatively regulates chondroitin sulfate levels. Maternally required for normal ventral epidermal enclosure and for embryo elongation during the early stages of embryonic development. In addition, involved in the elongation of the pharyngeal isthmus and in the organization of the actin cytoskeleton in the pharyngeal muscles during the later stages embryonic development. In adults, regulates egg-laying and the normal morphogenesis of the vulva. Also involved in the directed migration of hermaphrodite-specific neurons. The polypeptide is Exostosin-1 homolog (rib-1) (Caenorhabditis elegans).